Here is a 526-residue protein sequence, read N- to C-terminus: Lysine--tRNA ligase (526 aa).

The short motif at 30–38 is the 'HIGH' region element; that stretch reads PSGYVHIGN. Residues D95, C99, H100, H106, C177, and C199 each coordinate Zn(2+). The short motif at 280–284 is the 'KMSKS' region element; the sequence is KMSGS.

The protein belongs to the class-I aminoacyl-tRNA synthetase family. Zn(2+) serves as cofactor.

It is found in the cytoplasm. It catalyses the reaction tRNA(Lys) + L-lysine + ATP = L-lysyl-tRNA(Lys) + AMP + diphosphate. This Thermococcus kodakarensis (strain ATCC BAA-918 / JCM 12380 / KOD1) (Pyrococcus kodakaraensis (strain KOD1)) protein is Lysine--tRNA ligase (lysS).